A 500-amino-acid polypeptide reads, in one-letter code: Protein nucleotidyltransferase YdiU (500 aa).

Positions 96, 98, 99, 119, 131, 132, 182, and 189 each coordinate ATP. Aspartate 258 serves as the catalytic Proton acceptor. Mg(2+) contacts are provided by asparagine 259 and aspartate 268. Residue aspartate 268 coordinates ATP.

It belongs to the SELO family. Requires Mg(2+) as cofactor. It depends on Mn(2+) as a cofactor.

It carries out the reaction L-seryl-[protein] + ATP = 3-O-(5'-adenylyl)-L-seryl-[protein] + diphosphate. It catalyses the reaction L-threonyl-[protein] + ATP = 3-O-(5'-adenylyl)-L-threonyl-[protein] + diphosphate. The enzyme catalyses L-tyrosyl-[protein] + ATP = O-(5'-adenylyl)-L-tyrosyl-[protein] + diphosphate. The catalysed reaction is L-histidyl-[protein] + UTP = N(tele)-(5'-uridylyl)-L-histidyl-[protein] + diphosphate. It carries out the reaction L-seryl-[protein] + UTP = O-(5'-uridylyl)-L-seryl-[protein] + diphosphate. It catalyses the reaction L-tyrosyl-[protein] + UTP = O-(5'-uridylyl)-L-tyrosyl-[protein] + diphosphate. Nucleotidyltransferase involved in the post-translational modification of proteins. It can catalyze the addition of adenosine monophosphate (AMP) or uridine monophosphate (UMP) to a protein, resulting in modifications known as AMPylation and UMPylation. This chain is Protein nucleotidyltransferase YdiU, found in Rhizobium etli (strain CIAT 652).